The chain runs to 348 residues: Probable dual-specificity RNA methyltransferase RlmN (348 aa).

The active-site Proton acceptor is glutamate 89. Residues 95 to 328 enclose the Radical SAM core domain; that stretch reads HKNRNTVCVS…VTLRISYGSR (234 aa). Cysteine 102 and cysteine 333 are joined by a disulfide. Positions 109, 113, and 116 each coordinate [4Fe-4S] cluster. Residues 159–160, serine 191, 214–216, and asparagine 290 contribute to the S-adenosyl-L-methionine site; these read GE and SLH. The active-site S-methylcysteine intermediate is the cysteine 333.

It belongs to the radical SAM superfamily. RlmN family. [4Fe-4S] cluster is required as a cofactor.

The protein localises to the cytoplasm. The enzyme catalyses adenosine(2503) in 23S rRNA + 2 reduced [2Fe-2S]-[ferredoxin] + 2 S-adenosyl-L-methionine = 2-methyladenosine(2503) in 23S rRNA + 5'-deoxyadenosine + L-methionine + 2 oxidized [2Fe-2S]-[ferredoxin] + S-adenosyl-L-homocysteine. It catalyses the reaction adenosine(37) in tRNA + 2 reduced [2Fe-2S]-[ferredoxin] + 2 S-adenosyl-L-methionine = 2-methyladenosine(37) in tRNA + 5'-deoxyadenosine + L-methionine + 2 oxidized [2Fe-2S]-[ferredoxin] + S-adenosyl-L-homocysteine. Specifically methylates position 2 of adenine 2503 in 23S rRNA and position 2 of adenine 37 in tRNAs. This is Probable dual-specificity RNA methyltransferase RlmN from Dictyoglomus thermophilum (strain ATCC 35947 / DSM 3960 / H-6-12).